The sequence spans 44 residues: Antibacterial protein 3 (44 aa).

Met-1 carries the N-formylmethionine modification.

The protein belongs to the staphylococcal hemolytic protein family.

Its subcellular location is the secreted. Functionally, has hemolytic activity and also inhibits the growth of gonococci. The chain is Antibacterial protein 3 from Staphylococcus haemolyticus.